We begin with the raw amino-acid sequence, 313 residues long: Dehydrogenase/reductase SDR family member 1 (313 aa).

At Ala-2 the chain carries N-acetylalanine. Position 19 (Ile-19) interacts with NAD(+). Omega-N-methylarginine is present on Arg-21. Asp-64 serves as a coordination point for NAD(+). Ser-151 is a binding site for substrate. Residues Tyr-163, Lys-167, and Thr-198 each contribute to the NAD(+) site. Tyr-163 serves as the catalytic Proton acceptor. The interval 235–313 (CVVALATDPN…WIIALYTSKF (79 aa)) is required for ER localization.

This sequence belongs to the short-chain dehydrogenases/reductases (SDR) family. In terms of tissue distribution, detected in heart, liver, adrenal glands, and at low levels in skeletal muscle, kidney, pancreas and brain.

Its subcellular location is the endoplasmic reticulum. The catalysed reaction is 17alpha-estradiol + NADP(+) = estrone + NADPH + H(+). It carries out the reaction testosterone + NADP(+) = androst-4-ene-3,17-dione + NADPH + H(+). The enzyme catalyses prostaglandin E1 + NADPH + H(+) = prostaglandin F1 + NADP(+). It catalyses the reaction isatin + NADPH + H(+) = 3-hydroxyindolin-2-one + NADP(+). Its function is as follows. NADPH-dependent oxidoreductase which catalyzes the reduction of steroids (estrone, androstene-3,17-dione and cortisone) as well as prostaglandin E1, isatin and xenobiotics in vitro. May have a role in steroid and/or xenobiotic metabolism. In Homo sapiens (Human), this protein is Dehydrogenase/reductase SDR family member 1.